Consider the following 368-residue polypeptide: Glutamate 5-kinase (368 aa).

Position 12 (lysine 12) interacts with ATP. Positions 52, 139, and 151 each coordinate substrate. ATP is bound by residues 171–172 (SD) and 213–219 (TGGMKTK). Residues 277 to 354 (KGALIIDDGA…KEIEKLLGYI (78 aa)) enclose the PUA domain.

Belongs to the glutamate 5-kinase family.

It localises to the cytoplasm. The enzyme catalyses L-glutamate + ATP = L-glutamyl 5-phosphate + ADP. It participates in amino-acid biosynthesis; L-proline biosynthesis; L-glutamate 5-semialdehyde from L-glutamate: step 1/2. In terms of biological role, catalyzes the transfer of a phosphate group to glutamate to form L-glutamate 5-phosphate. The chain is Glutamate 5-kinase from Pelagibacter ubique (strain HTCC1062).